The chain runs to 364 residues: Acetylserotonin O-methyltransferase 1 (364 aa).

S-adenosyl-L-homocysteine-binding residues include Gly208, Asp231, Asp251, and Lys265. His269 serves as the catalytic Proton acceptor. Residues Glu300 and Glu330 contribute to the active site.

It belongs to the class I-like SAM-binding methyltransferase superfamily. Cation-independent O-methyltransferase family. As to quaternary structure, homodimer. Expressed in leaves, stems and flowers.

The protein resides in the cytoplasm. The enzyme catalyses N-acetylserotonin + S-adenosyl-L-methionine = melatonin + S-adenosyl-L-homocysteine + H(+). Its pathway is aromatic compound metabolism; melatonin biosynthesis; melatonin from serotonin: step 1/2. In terms of biological role, methyltransferase which catalyzes the transfer of a methyl group onto N-acetylserotonin, producing melatonin (N-acetyl-5-methoxytryptamine). The chain is Acetylserotonin O-methyltransferase 1 from Oryza sativa subsp. japonica (Rice).